The primary structure comprises 434 residues: 26S proteasome regulatory subunit RPN6 (434 aa).

Residue S2 is modified to N-acetylserine. In terms of domain architecture, PCI spans 235 to 404 (AFSYFFESFE…GWLYVYETPN (170 aa)).

Belongs to the proteasome subunit S9 family. In terms of assembly, component of the lid subcomplex of the 19S proteasome regulatory particle complex (also named PA700 complex). The 26S proteasome consists of a 20S proteasome core and two 19S regulatory subunits. N-acetylated by NAT1.

Functionally, component of the lid subcomplex of the 26S proteasome, a multiprotein complex involved in the ATP-dependent degradation of ubiquitinated proteins. In the complex, RPN6 is required for proteasome assembly. In Saccharomyces cerevisiae (strain ATCC 204508 / S288c) (Baker's yeast), this protein is 26S proteasome regulatory subunit RPN6 (RPN6).